We begin with the raw amino-acid sequence, 1320 residues long: Poly [ADP-ribose] polymerase tankyrase-1 (1320 aa).

Positions 1–15 are enriched in basic residues; that stretch reads MAASRRSQHHHHHHQ. 2 disordered regions span residues 1 to 88 and 111 to 152; these read MAAS…DGAV and AGGG…AAGV. Residues 25-46 show a composition bias toward pro residues; sequence SAPPPPPPPPLSPGLAPGPTPA. The span at 69-82 shows a compositional bias: basic and acidic residues; that stretch reads DGSRDPPDRPRSPD. Residues 120–152 show a composition bias toward low complexity; the sequence is NSASSASSPTSSSSSSPSSPGSSLAESPEAAGV. ANK repeat units lie at residues 174–202, 208–237, 241–270, 274–303, 361–390, 394–423, 427–456, 514–546, 550–579, 583–612, 676–705, 709–738, 742–771, 775–803, 829–858, 862–891, 895–924, and 928–957; these read GALR…NVNA, RKSS…NVHA, GGLI…DPNA, WNYT…DPNI, RKST…DVHA, GGLV…CVNA, WQFT…DPTL, SHET…NVNE, DFMT…KMNA, LGQT…DPSI, RHST…DVHA, GGLV…SVNV, WKFT…DPTK, DGNT…LLDA, RNST…DVNA, GGLI…CVNA, WAFT…DPTM, and EGQT…LPTC. The 64-residue stretch at 1019–1082 folds into the SAM domain; the sequence is GLDMNISQFL…IKGVERLLGG (64 aa). The 206-residue stretch at 1105 to 1310 folds into the PARP catalytic domain; the sequence is APEDKEYQSV…YQIMKPEAPS (206 aa). Zn(2+)-binding residues include C1227, H1230, C1235, and C1238.

This sequence belongs to the ARTD/PARP family. Oligomerizes and associates with TNKS2. Interacts with the cytoplasmic domain of LNPEP/Otase in SLC2A4/GLUT4-vesicles. Binds to the N-terminus of telomeric TERF1 via the ANK repeats. Found in a complex with POT1; TERF1 and TINF2. Interacts with AXIN1. Interacts with AXIN2. Interacts with BLZF1 and CASC3. Interacts with NUMA1. Post-translationally, phosphorylated on serine residues by MAPK kinases upon insulin stimulation. Phosphorylated during mitosis. In terms of processing, ubiquitinated by RNF146 when auto-poly-ADP-ribosylated, leading to its degradation. ADP-ribosylated (-auto). Poly-ADP-ribosylated protein is recognized by RNF146, followed by ubiquitination.

Its subcellular location is the cytoplasm. It localises to the golgi apparatus membrane. The protein localises to the cytoskeleton. The protein resides in the microtubule organizing center. It is found in the centrosome. Its subcellular location is the nucleus. It localises to the nuclear pore complex. The protein localises to the chromosome. The protein resides in the telomere. It is found in the spindle pole. The catalysed reaction is NAD(+) + (ADP-D-ribosyl)n-acceptor = nicotinamide + (ADP-D-ribosyl)n+1-acceptor + H(+).. It carries out the reaction L-aspartyl-[protein] + NAD(+) = 4-O-(ADP-D-ribosyl)-L-aspartyl-[protein] + nicotinamide. The enzyme catalyses L-glutamyl-[protein] + NAD(+) = 5-O-(ADP-D-ribosyl)-L-glutamyl-[protein] + nicotinamide. Poly-ADP-ribosyltransferase involved in various processes such as Wnt signaling pathway, telomere length and vesicle trafficking. Acts as an activator of the Wnt signaling pathway by mediating poly-ADP-ribosylation (PARsylation) of AXIN1 and AXIN2, 2 key components of the beta-catenin destruction complex: poly-ADP-ribosylated target proteins are recognized by RNF146, which mediates their ubiquitination and subsequent degradation. Also mediates PARsylation of BLZF1 and CASC3, followed by recruitment of RNF146 and subsequent ubiquitination. Mediates PARsylation of TERF1, thereby contributing to the regulation of telomere length. Involved in centrosome maturation during prometaphase by mediating PARsylation of HEPACAM2/MIKI. May also regulate vesicle trafficking and modulate the subcellular distribution of SLC2A4/GLUT4-vesicles. May be involved in spindle pole assembly through PARsylation of NUMA1. Stimulates 26S proteasome activity. This Mus musculus (Mouse) protein is Poly [ADP-ribose] polymerase tankyrase-1 (Tnks).